Here is a 277-residue protein sequence, read N- to C-terminus: MAIISMKQLLEAGVHFGHQTNKWNPKMKPYIFGARNNIYIIDLQQTVGLFQNAYNFVIDTVSEGGEIMFIGTKKQSQDSIHDEATRCGMPYVNQRWLGGMLTNFVTIKKRIDRLNYLDQIFEDDSVRAFPKKEIMGLQKEREKLVKVLGGIQKMKSLPAALFIVDPKRETIAVNEAKKLRIPIIAIVDTNCDPENIDYIIPGNDDAIRAIKLFSSKFADAVTEGKRRYEERLQAETDKDAESSTVQQEENPEADIPESIETKESVSAAADSDLDENE.

The segment covering 228 to 241 (YEERLQAETDKDAE) has biased composition (basic and acidic residues). Positions 228-277 (YEERLQAETDKDAESSTVQQEENPEADIPESIETKESVSAAADSDLDENE) are disordered.

It belongs to the universal ribosomal protein uS2 family.

This Syntrophus aciditrophicus (strain SB) protein is Small ribosomal subunit protein uS2.